The sequence spans 344 residues: Phosphoribosylformylglycinamidine cyclo-ligase (344 aa).

The protein belongs to the AIR synthase family.

The protein resides in the cytoplasm. The enzyme catalyses 2-formamido-N(1)-(5-O-phospho-beta-D-ribosyl)acetamidine + ATP = 5-amino-1-(5-phospho-beta-D-ribosyl)imidazole + ADP + phosphate + H(+). The protein operates within purine metabolism; IMP biosynthesis via de novo pathway; 5-amino-1-(5-phospho-D-ribosyl)imidazole from N(2)-formyl-N(1)-(5-phospho-D-ribosyl)glycinamide: step 2/2. The sequence is that of Phosphoribosylformylglycinamidine cyclo-ligase from Exiguobacterium sibiricum (strain DSM 17290 / CCUG 55495 / CIP 109462 / JCM 13490 / 255-15).